The primary structure comprises 124 residues: Conotoxin Im14.2 (124 aa).

An N-terminal signal peptide occupies residues 1–20; it reads MARFLSILLCFAMATGLAAG. Residues 21–99 constitute a propeptide that is removed on maturation; sequence IRYPDRVLGR…AENPVRDPKK (79 aa).

In terms of processing, contain 2 disulfide bonds. As to expression, expressed by the venom duct.

It localises to the secreted. Probable neurotoxin. In Conus imperialis (Imperial cone), this protein is Conotoxin Im14.2.